The sequence spans 210 residues: Thymidylate kinase (210 aa).

ATP is bound at residue 9 to 16; the sequence is GLEGAGKS.

Belongs to the thymidylate kinase family.

It catalyses the reaction dTMP + ATP = dTDP + ADP. Its function is as follows. Phosphorylation of dTMP to form dTDP in both de novo and salvage pathways of dTTP synthesis. This chain is Thymidylate kinase, found in Aliivibrio fischeri (strain MJ11) (Vibrio fischeri).